A 720-amino-acid polypeptide reads, in one-letter code: Photosystem I P700 chlorophyll a apoprotein A1 (720 aa).

Helical transmembrane passes span 62–85 (IFSA…FHGA), 148–171 (LYCT…FHYH), 186–210 (LNHH…HVSL), 282–300 (IVHH…GHMY), 337–360 (WHAQ…HHMY), 376–402 (LSLF…IFLV), 424–446 (AIIS…LYIH), and 522–540 (FLVH…LILL). C564 and C573 together coordinate [4Fe-4S] cluster. Transmembrane regions (helical) follow at residues 580-601 (HVFL…HFSW) and 655-677 (LSAY…MFLF). H666 is a chlorophyll a' binding site. M674 and Y682 together coordinate chlorophyll a. W683 contributes to the phylloquinone binding site. The chain crosses the membrane as a helical span at residues 715-720 (AVGVAH).

This sequence belongs to the PsaA/PsaB family. In terms of assembly, the PsaA/B heterodimer binds the P700 chlorophyll special pair and subsequent electron acceptors. PSI consists of a core antenna complex that captures photons, and an electron transfer chain that converts photonic excitation into a charge separation. The eukaryotic PSI reaction center is composed of at least 11 subunits. Requires P700 is a chlorophyll a/chlorophyll a' dimer, A0 is one or more chlorophyll a, A1 is one or both phylloquinones and FX is a shared 4Fe-4S iron-sulfur center. as cofactor.

Its subcellular location is the plastid. It is found in the chloroplast thylakoid membrane. It catalyses the reaction reduced [plastocyanin] + hnu + oxidized [2Fe-2S]-[ferredoxin] = oxidized [plastocyanin] + reduced [2Fe-2S]-[ferredoxin]. In terms of biological role, psaA and PsaB bind P700, the primary electron donor of photosystem I (PSI), as well as the electron acceptors A0, A1 and FX. PSI is a plastocyanin-ferredoxin oxidoreductase, converting photonic excitation into a charge separation, which transfers an electron from the donor P700 chlorophyll pair to the spectroscopically characterized acceptors A0, A1, FX, FA and FB in turn. Oxidized P700 is reduced on the lumenal side of the thylakoid membrane by plastocyanin. This Ephedra tweediana (Vining horsetail) protein is Photosystem I P700 chlorophyll a apoprotein A1.